Here is a 255-residue protein sequence, read N- to C-terminus: tRNA (guanine-N(1)-)-methyltransferase (255 aa).

S-adenosyl-L-methionine-binding positions include G113 and 133 to 138 (IGDYVL).

Belongs to the RNA methyltransferase TrmD family. As to quaternary structure, homodimer.

It localises to the cytoplasm. The catalysed reaction is guanosine(37) in tRNA + S-adenosyl-L-methionine = N(1)-methylguanosine(37) in tRNA + S-adenosyl-L-homocysteine + H(+). Specifically methylates guanosine-37 in various tRNAs. This Salmonella choleraesuis (strain SC-B67) protein is tRNA (guanine-N(1)-)-methyltransferase.